Reading from the N-terminus, the 275-residue chain is Diaminopimelate epimerase (275 aa).

3 residues coordinate substrate: N12, Q45, and N65. C74 (proton donor) is an active-site residue. Substrate contacts are provided by residues 75-76 (GN), N158, N191, and 209-210 (ER). The active-site Proton acceptor is the C218. 219 to 220 (GT) serves as a coordination point for substrate.

This sequence belongs to the diaminopimelate epimerase family. As to quaternary structure, homodimer.

The protein localises to the cytoplasm. It catalyses the reaction (2S,6S)-2,6-diaminopimelate = meso-2,6-diaminopimelate. It participates in amino-acid biosynthesis; L-lysine biosynthesis via DAP pathway; DL-2,6-diaminopimelate from LL-2,6-diaminopimelate: step 1/1. Functionally, catalyzes the stereoinversion of LL-2,6-diaminopimelate (L,L-DAP) to meso-diaminopimelate (meso-DAP), a precursor of L-lysine and an essential component of the bacterial peptidoglycan. The protein is Diaminopimelate epimerase of Shewanella oneidensis (strain ATCC 700550 / JCM 31522 / CIP 106686 / LMG 19005 / NCIMB 14063 / MR-1).